A 243-amino-acid polypeptide reads, in one-letter code: Uridylate kinase (243 aa).

15-18 serves as a coordination point for ATP; it reads KLSG. Residues 23–28 form an involved in allosteric activation by GTP region; that stretch reads GEEGFG. Gly57 is a binding site for UMP. ATP contacts are provided by Gly58 and Arg62. UMP contacts are provided by residues Asp77 and 138–145; that span reads TGNPFCTT. Residues Thr165, Tyr171, and Asp174 each contribute to the ATP site.

Belongs to the UMP kinase family. As to quaternary structure, homohexamer.

Its subcellular location is the cytoplasm. The enzyme catalyses UMP + ATP = UDP + ADP. It participates in pyrimidine metabolism; CTP biosynthesis via de novo pathway; UDP from UMP (UMPK route): step 1/1. Allosterically activated by GTP. Inhibited by UTP. Its function is as follows. Catalyzes the reversible phosphorylation of UMP to UDP. The sequence is that of Uridylate kinase from Shewanella denitrificans (strain OS217 / ATCC BAA-1090 / DSM 15013).